Here is a 135-residue protein sequence, read N- to C-terminus: Hemoglobin subunit beta-2 (135 aa).

In terms of domain architecture, Globin spans 2–135; sequence HWTAEEKALV…VVDALSKGYH (134 aa). Positions 57 and 81 each coordinate heme b.

The protein belongs to the globin family. As to quaternary structure, hb 2 is a heterotetramer of two alpha and two beta-2 chains. In terms of tissue distribution, red blood cells (at protein level).

In terms of biological role, involved in oxygen transport from gills to the various peripheral tissues. In Somniosus microcephalus (Greenland sleeper shark), this protein is Hemoglobin subunit beta-2.